Consider the following 473-residue polypeptide: Rifampicin monooxygenase (473 aa).

The FAD site is built by T12, E31, K32, and R41. R43 lines the rifampicin pocket. FAD-binding residues include Q98, V122, and T156. R196 provides a ligand contact to rifampicin. D276 contributes to the FAD binding site. G285 is a binding site for rifampicin. 2 residues coordinate FAD: L289 and N290.

This sequence belongs to the rifampicin monooxygenase family. As to quaternary structure, homodimer. The cofactor is FAD.

The enzyme catalyses rifampicin + NADPH + O2 = rifampicin para-naphthoquinone carboxamide + NADP(+) + H2O + H(+). The catalysed reaction is rifampicin + NADH + O2 = rifampicin para-naphthoquinone carboxamide + NAD(+) + H2O + H(+). Functionally, monooxygenase that can modify rifampicin, thereby inactivating its antibiotic activity. It constitutes a secondary rifampicin resistance factor. The sequence is that of Rifampicin monooxygenase from Nocardia farcinica (strain IFM 10152).